Consider the following 162-residue polypeptide: Phosphopantetheine adenylyltransferase (162 aa).

Ser11 serves as a coordination point for substrate. ATP is bound by residues 11 to 12 (SF) and His19. Substrate is bound by residues Lys43, Val76, and Arg90. Residues 91 to 93 (GLR), Glu101, and 126 to 132 (HLYISSS) contribute to the ATP site.

This sequence belongs to the bacterial CoaD family. As to quaternary structure, homohexamer. The cofactor is Mg(2+).

The protein localises to the cytoplasm. The enzyme catalyses (R)-4'-phosphopantetheine + ATP + H(+) = 3'-dephospho-CoA + diphosphate. Its pathway is cofactor biosynthesis; coenzyme A biosynthesis; CoA from (R)-pantothenate: step 4/5. Reversibly transfers an adenylyl group from ATP to 4'-phosphopantetheine, yielding dephospho-CoA (dPCoA) and pyrophosphate. This is Phosphopantetheine adenylyltransferase from Streptococcus pneumoniae (strain CGSP14).